The chain runs to 120 residues: MESQAKVKISDKAEGIIERDMQNSVIGRREISLKVYHMGSGTPSRKDIIKAIIQALGSQENLVVVRKISTSYGAGISNVKLHIYKSREILEKVEPKYLLDRDAGTKQKKGGSKGGQGAKG.

The segment at Arg-101–Gly-120 is disordered.

It belongs to the eukaryotic ribosomal protein eS24 family.

This chain is Small ribosomal subunit protein eS24, found in Saccharolobus solfataricus (strain ATCC 35092 / DSM 1617 / JCM 11322 / P2) (Sulfolobus solfataricus).